Consider the following 227-residue polypeptide: Cytochrome c oxidase subunit 2 (227 aa).

Residues 1–14 (MAHPVQLGLQDATS) are Mitochondrial intermembrane-facing. A helical transmembrane segment spans residues 15 to 45 (PVMEELITFHDQALMAMFLISFLILYALSST). Residues 46 to 59 (LTTKLTNTNITDAQ) are Mitochondrial matrix-facing. Residues 60-87 (EMETIWTILPAVILILIALPSLRILYMT) form a helical membrane-spanning segment. Residues 88 to 227 (DEINNPSFTI…IFEMGPVFTL (140 aa)) are Mitochondrial intermembrane-facing. Positions 161, 196, 198, 200, 204, and 207 each coordinate Cu cation. E198 lines the Mg(2+) pocket.

The protein belongs to the cytochrome c oxidase subunit 2 family. In terms of assembly, component of the cytochrome c oxidase (complex IV, CIV), a multisubunit enzyme composed of 14 subunits. The complex is composed of a catalytic core of 3 subunits MT-CO1, MT-CO2 and MT-CO3, encoded in the mitochondrial DNA, and 11 supernumerary subunits COX4I, COX5A, COX5B, COX6A, COX6B, COX6C, COX7A, COX7B, COX7C, COX8 and NDUFA4, which are encoded in the nuclear genome. The complex exists as a monomer or a dimer and forms supercomplexes (SCs) in the inner mitochondrial membrane with NADH-ubiquinone oxidoreductase (complex I, CI) and ubiquinol-cytochrome c oxidoreductase (cytochrome b-c1 complex, complex III, CIII), resulting in different assemblies (supercomplex SCI(1)III(2)IV(1) and megacomplex MCI(2)III(2)IV(2)). Found in a complex with TMEM177, COA6, COX18, COX20, SCO1 and SCO2. Interacts with TMEM177 in a COX20-dependent manner. Interacts with COX20. Interacts with COX16. Cu cation is required as a cofactor.

The protein localises to the mitochondrion inner membrane. The catalysed reaction is 4 Fe(II)-[cytochrome c] + O2 + 8 H(+)(in) = 4 Fe(III)-[cytochrome c] + 2 H2O + 4 H(+)(out). In terms of biological role, component of the cytochrome c oxidase, the last enzyme in the mitochondrial electron transport chain which drives oxidative phosphorylation. The respiratory chain contains 3 multisubunit complexes succinate dehydrogenase (complex II, CII), ubiquinol-cytochrome c oxidoreductase (cytochrome b-c1 complex, complex III, CIII) and cytochrome c oxidase (complex IV, CIV), that cooperate to transfer electrons derived from NADH and succinate to molecular oxygen, creating an electrochemical gradient over the inner membrane that drives transmembrane transport and the ATP synthase. Cytochrome c oxidase is the component of the respiratory chain that catalyzes the reduction of oxygen to water. Electrons originating from reduced cytochrome c in the intermembrane space (IMS) are transferred via the dinuclear copper A center (CU(A)) of subunit 2 and heme A of subunit 1 to the active site in subunit 1, a binuclear center (BNC) formed by heme A3 and copper B (CU(B)). The BNC reduces molecular oxygen to 2 water molecules using 4 electrons from cytochrome c in the IMS and 4 protons from the mitochondrial matrix. This is Cytochrome c oxidase subunit 2 (MT-CO2) from Papio anubis (Olive baboon).